We begin with the raw amino-acid sequence, 517 residues long: Probable bifunctional methylthioribulose-1-phosphate dehydratase/enolase-phosphatase E1 (517 aa).

The segment at 1–242 is methylthioribulose-1-phosphate dehydratase; it reads MACGGCSCEA…CIKLYQLGID (242 aa). Residue Cys-114 coordinates substrate. Residues His-132 and His-134 each coordinate Zn(2+). Glu-157 acts as the Proton donor/acceptor; for methylthioribulose-1-phosphate dehydratase activity in catalysis. Residue His-207 coordinates Zn(2+). Positions 278–517 are enolase-phosphatase E1; that stretch reads VVLDIEGTTT…FRTIKSFSEI (240 aa). Mg(2+) is bound by residues Asp-281 and Glu-283. Substrate is bound by residues 416–417 and Lys-450; that span reads SS. Residue Asp-476 participates in Mg(2+) binding.

It in the N-terminal section; belongs to the aldolase class II family. MtnB subfamily. The protein in the C-terminal section; belongs to the HAD-like hydrolase superfamily. MasA/MtnC family. The cofactor is Zn(2+). Mg(2+) serves as cofactor.

It carries out the reaction 5-(methylsulfanyl)-D-ribulose 1-phosphate = 5-methylsulfanyl-2,3-dioxopentyl phosphate + H2O. The enzyme catalyses 5-methylsulfanyl-2,3-dioxopentyl phosphate + H2O = 1,2-dihydroxy-5-(methylsulfanyl)pent-1-en-3-one + phosphate. The protein operates within amino-acid biosynthesis; L-methionine biosynthesis via salvage pathway; L-methionine from S-methyl-5-thio-alpha-D-ribose 1-phosphate: step 2/6. It functions in the pathway amino-acid biosynthesis; L-methionine biosynthesis via salvage pathway; L-methionine from S-methyl-5-thio-alpha-D-ribose 1-phosphate: step 3/6. Its pathway is amino-acid biosynthesis; L-methionine biosynthesis via salvage pathway; L-methionine from S-methyl-5-thio-alpha-D-ribose 1-phosphate: step 4/6. The chain is Probable bifunctional methylthioribulose-1-phosphate dehydratase/enolase-phosphatase E1 from Sorghum bicolor (Sorghum).